The chain runs to 181 residues: uncharacterized protein (181 aa).

This sequence belongs to the isochorismatase family.

This is an uncharacterized protein from Bacillus subtilis (strain 168).